The sequence spans 96 residues: Protein Vpr (96 aa).

Positions 1 to 42 (MEQAPADQGPQREPYNEWALELLEELKSEAVRHFPRIWLHSL) are homooligomerization. 3 positions are modified to phosphoserine; by host: Ser-79, Ser-94, and Ser-96.

Belongs to the HIV-1 VPR protein family. As to quaternary structure, homooligomer, may form homodimer. Interacts with p6-gag region of the Pr55 Gag precursor protein through a (Leu-X-X)4 motif near the C-terminus of the P6gag protein. Interacts with host UNG. May interact with host RAD23A/HHR23A. Interacts with host VPRBP/DCAF1, leading to hijack the CUL4A-RBX1-DDB1-DCAF1/VPRBP complex, mediating ubiquitination of host proteins such as TERT and ZGPAT and arrest of the cell cycle in G2 phase. Post-translationally, phosphorylated on several residues by host. These phosphorylations regulate VPR activity for the nuclear import of the HIV-1 pre-integration complex.

The protein localises to the virion. It is found in the host nucleus. The protein resides in the host extracellular space. Its function is as follows. During virus replication, may deplete host UNG protein, and incude G2-M cell cycle arrest. Acts by targeting specific host proteins for degradation by the 26S proteasome, through association with the cellular CUL4A-DDB1 E3 ligase complex by direct interaction with host VPRPB/DCAF-1. Cell cycle arrest reportedly occurs within hours of infection and is not blocked by antiviral agents, suggesting that it is initiated by the VPR carried into the virion. Additionally, VPR induces apoptosis in a cell cycle dependent manner suggesting that these two effects are mechanistically linked. Detected in the serum and cerebrospinal fluid of AIDS patient, VPR may also induce cell death to bystander cells. During virus entry, plays a role in the transport of the viral pre-integration (PIC) complex to the host nucleus. This function is crucial for viral infection of non-dividing macrophages. May act directly at the nuclear pore complex, by binding nucleoporins phenylalanine-glycine (FG)-repeat regions. This is Protein Vpr from Human immunodeficiency virus type 1 group M subtype D (isolate ELI) (HIV-1).